Here is a 705-residue protein sequence, read N- to C-terminus: Translation initiation factor IF-2 (705 aa).

Residues 40 to 124 (DDQIKALDKK…QPAAPKEIPS (85 aa)) are disordered. Over residues 41-58 (DQIKALDKKFKKEQKNDN) the composition is skewed to basic and acidic residues. Low complexity predominate over residues 59 to 77 (KQSTQNNHQKSNNQNQNKG). The segment covering 94–108 (KGNKKNNRNNKKNNK) has biased composition (basic residues). Residues 207–376 (ERPAVVTIMG…GLVAEVQELK (170 aa)) enclose the tr-type G domain. Residues 216–223 (GHVDHGKT) form a G1 region. Position 216-223 (216-223 (GHVDHGKT)) interacts with GTP. The interval 241 to 245 (GITQH) is G2. The interval 262-265 (DTPG) is G3. GTP-binding positions include 262 to 266 (DTPGH) and 316 to 319 (NKID). Residues 316–319 (NKID) are G4. Positions 352-354 (SAL) are G5.

It belongs to the TRAFAC class translation factor GTPase superfamily. Classic translation factor GTPase family. IF-2 subfamily.

The protein resides in the cytoplasm. One of the essential components for the initiation of protein synthesis. Protects formylmethionyl-tRNA from spontaneous hydrolysis and promotes its binding to the 30S ribosomal subunits. Also involved in the hydrolysis of GTP during the formation of the 70S ribosomal complex. The polypeptide is Translation initiation factor IF-2 (Staphylococcus aureus (strain Mu3 / ATCC 700698)).